The following is a 1045-amino-acid chain: MAPPDSTHGGSFRDHLKTNDRSSTSKGKQRYAPLHEAIPEEISSFRSPSEYADADTDSDSDHENSGSYQLRPVDRYGSHHSSAFIPVIRDDGGVETYLDSITEAEQELLSASKQYDLFDDDDSDDLDSDEEATLRYKLKDRLKRRRARLQAWPPVKYARIWWRTLLAVIVTLAVVVWGFLSFAVSHREEPKVWPMVPSDSWFPSPKGGTLKHWEESYKKAQSLVRNMTLVEKVNITTGIGWQMGLCVGNTGLRFADHVSAFPAGITTGSTWNRELMRERGVAMGREARLKGVNVLLGPSMGPLGMMPAGGRNWEGFGSDPVLQAVAAAETIRGIQSNGVMATAKHFVMNEQEHFRQPFEWGIPTALSSNVGDRALHEVFAWPFAESIRADVASVMCSYQMVNNSHACENSKLLNGILKDELGFQGFVQSDWLAQRSGINSVLGGLDMSMPGDGLHWVDGKSLWGSELTRAVLNTSVPVERLNDMVTRIVAAWYHLGQDTWERPPPEGNGGPNFSSWTNDKVGWLHTGSNDGSYAVVNHYVDAQGTGPEAHSIIARKVAAEGTVLLKNVDRTLPLSRNASSPSGGILRVGIYGDDAGPASGPNACPDRGCNQGTLATGWGSGTVEFPYLVSPIEALESAWSTEIESTAYLRNAVMPADAVDKDLCLVFVNADSGEGYISAGGIHGDRNDLFLQKGGDTLVRTVASNCGGGQGKTVIVIHAVGPVVMESWIDLPGVHAVLLSNLPGQESGNALMDVLFGEVDASGRLPYTIGKSLEDYGPGAQVLYEPNAPVPQADFLDALYIDYRHFDRYNITPRFEFGFGLSYTTFELSDLSISPLQRKSRSPPPRPADAVAPPVYDTSLPDPASALFPTGFQPIFKYIYPYLSNLDGTAPRNYSFYPKGYNETQSPSPAGGGAGGHPALYEEMVSVKLQVSNTGDRKGQEVVQLYVSFPPDVTEEGDWVEVDSDADKTGEKQRERMKIEFPERVLRNFTKIELEPSERREVQMTLSRKDLSYWSTREQNWVMPEGKFQIWVGRSSRDLPLMGEY.

Residues 1–74 form a disordered region; the sequence is MAPPDSTHGG…SGSYQLRPVD (74 aa). Over 1-163 the chain is Cytoplasmic; it reads MAPPDSTHGG…PVKYARIWWR (163 aa). Over residues 11 to 20 the composition is skewed to basic and acidic residues; sequence SFRDHLKTND. A helical; Signal-anchor for type II membrane protein membrane pass occupies residues 164–184; sequence TLLAVIVTLAVVVWGFLSFAV. The Extracellular segment spans residues 185–1045; the sequence is SHREEPKVWP…SRDLPLMGEY (861 aa). N-linked (GlcNAc...) asparagine glycosylation is found at asparagine 226, asparagine 234, and asparagine 402. Aspartate 430 is a catalytic residue. Asparagine 473, asparagine 512, asparagine 577, asparagine 893, asparagine 902, and asparagine 988 each carry an N-linked (GlcNAc...) asparagine glycan.

The protein belongs to the glycosyl hydrolase 3 family.

The protein localises to the cell membrane. It catalyses the reaction Hydrolysis of terminal, non-reducing beta-D-glucosyl residues with release of beta-D-glucose.. The protein operates within glycan metabolism; cellulose degradation. Functionally, beta-glucosidases are one of a number of cellulolytic enzymes involved in the degradation of cellulosic biomass. Catalyzes the last step releasing glucose from the inhibitory cellobiose. The sequence is that of Probable beta-glucosidase E (bglE) from Neosartorya fischeri (strain ATCC 1020 / DSM 3700 / CBS 544.65 / FGSC A1164 / JCM 1740 / NRRL 181 / WB 181) (Aspergillus fischerianus).